Here is a 302-residue protein sequence, read N- to C-terminus: Monopolin complex subunit MAM1 (302 aa).

Disordered regions lie at residues 53–83 (YHKEHSVKPKQNSGNVAAKEDKDTQHLQNNV) and 257–276 (TSENPFSSSPNTKKIKSKGK). Residues 257–268 (TSENPFSSSPNT) show a composition bias toward polar residues.

In terms of assembly, component of the monopolin complex composed of at least CSM1, LRS4 and MAM1. The complex associates with the kinetochore during late pachytene. Post-translationally, phosphorylated by CDC5. This phosphorylation is required for the location to the kinetochores during late pachytene.

It localises to the nucleus. Its function is as follows. Component of the monopolin complex which promotes monoorientation during meiosis I, required for chromosome segregation during meiosis. The chain is Monopolin complex subunit MAM1 (MAM1) from Saccharomyces cerevisiae (strain ATCC 204508 / S288c) (Baker's yeast).